Consider the following 240-residue polypeptide: Short palate, lung and nasal epithelium carcinoma-associated protein 2B (240 aa).

Residues 1–19 form the signal peptide; sequence MVQLWKLVLLCGLLAGTSA. Residues cysteine 163 and cysteine 206 are joined by a disulfide bond.

It belongs to the BPI/LBP/Plunc superfamily. Plunc family. Parotid glands.

It is found in the secreted. The polypeptide is Short palate, lung and nasal epithelium carcinoma-associated protein 2B (SPLUNC2B) (Bos taurus (Bovine)).